A 242-amino-acid polypeptide reads, in one-letter code: tRNA (guanine-N(1)-)-methyltransferase (242 aa).

Residues G111 and I130 to L135 contribute to the S-adenosyl-L-methionine site.

It belongs to the RNA methyltransferase TrmD family. In terms of assembly, homodimer.

It localises to the cytoplasm. It carries out the reaction guanosine(37) in tRNA + S-adenosyl-L-methionine = N(1)-methylguanosine(37) in tRNA + S-adenosyl-L-homocysteine + H(+). Its function is as follows. Specifically methylates guanosine-37 in various tRNAs. The sequence is that of tRNA (guanine-N(1)-)-methyltransferase from Onion yellows phytoplasma (strain OY-M).